Here is a 285-residue protein sequence, read N- to C-terminus: Bifunctional protein FolD (285 aa).

Residues 165–167, serine 190, and isoleucine 231 contribute to the NADP(+) site; that span reads GRS.

It belongs to the tetrahydrofolate dehydrogenase/cyclohydrolase family. As to quaternary structure, homodimer.

The enzyme catalyses (6R)-5,10-methylene-5,6,7,8-tetrahydrofolate + NADP(+) = (6R)-5,10-methenyltetrahydrofolate + NADPH. The catalysed reaction is (6R)-5,10-methenyltetrahydrofolate + H2O = (6R)-10-formyltetrahydrofolate + H(+). The protein operates within one-carbon metabolism; tetrahydrofolate interconversion. Catalyzes the oxidation of 5,10-methylenetetrahydrofolate to 5,10-methenyltetrahydrofolate and then the hydrolysis of 5,10-methenyltetrahydrofolate to 10-formyltetrahydrofolate. This is Bifunctional protein FolD from Alkaliphilus oremlandii (strain OhILAs) (Clostridium oremlandii (strain OhILAs)).